Consider the following 62-residue polypeptide: MIPVRCFTCGKVIAGSWEEYKRRTGEGEDPATVLDDLKFVRYCCRRMFLAHVELVDTMAPYQ.

Zn(2+) contacts are provided by C6, C9, C43, and C44.

It belongs to the archaeal Rpo10/eukaryotic RPB10 RNA polymerase subunit family. As to quaternary structure, part of the RNA polymerase complex. Zn(2+) is required as a cofactor.

It localises to the cytoplasm. The catalysed reaction is RNA(n) + a ribonucleoside 5'-triphosphate = RNA(n+1) + diphosphate. Functionally, DNA-dependent RNA polymerase (RNAP) catalyzes the transcription of DNA into RNA using the four ribonucleoside triphosphates as substrates. The protein is DNA-directed RNA polymerase subunit Rpo10 of Methanococcoides burtonii (strain DSM 6242 / NBRC 107633 / OCM 468 / ACE-M).